The sequence spans 413 residues: Eukaryotic initiation factor 4A-7 (413 aa).

Positions 40–68 (DSFDAMGLQENLLRGIYAYGFEKPSAIQQ) match the Q motif motif. The region spanning 71–241 (IVPFCKGLDV…RKFMNKPVRI (171 aa)) is the Helicase ATP-binding domain. 84–91 (AQSGTGKT) is an ATP binding site. A DEAD box motif is present at residues 189–192 (DEAD). The region spanning 252-413 (GIKQFYVNVD…ELPANVADLL (162 aa)) is the Helicase C-terminal domain.

Belongs to the DEAD box helicase family. eIF4A subfamily. In terms of assembly, eIF4F is a multi-subunit complex, the composition of which varies with external and internal environmental conditions. It is composed of at least EIF4A, EIF4E and EIF4G.

It carries out the reaction ATP + H2O = ADP + phosphate + H(+). ATP-dependent RNA helicase which is a subunit of the eIF4F complex involved in cap recognition and is required for mRNA binding to ribosome. In the current model of translation initiation, eIF4A unwinds RNA secondary structures in the 5'-UTR of mRNAs which is necessary to allow efficient binding of the small ribosomal subunit, and subsequent scanning for the initiator codon. The sequence is that of Eukaryotic initiation factor 4A-7 from Nicotiana tabacum (Common tobacco).